A 375-amino-acid polypeptide reads, in one-letter code: Putative ZDHHC-type palmitoyltransferase 8 (375 aa).

2 helical membrane-spanning segments follow: residues 4–24 (LFDFVVLSSFIILLPLVTDFL) and 40–60 (VVGMILVFFIVSLIFAGVSLW). An N-linked (GlcNAc...) asparagine glycan is attached at Asn-95. 3 consecutive transmembrane segments (helical) span residues 105 to 125 (ITFYFHIFFTIQLVVNLYYYY), 221 to 241 (FILFIGYTVMALIYACYLSFF), and 285 to 305 (YSFIFLCCCLIVTASFGILLF). The region spanning 176–226 (VSDGKWSTINKPKSHHCRICKRCIDSMDHHCPFAANCIGINNHHYFILFIG) is the DHHC domain. N-linked (GlcNAc...) asparagine glycosylation is present at Asn-343.

The protein belongs to the DHHC palmitoyltransferase family.

The protein resides in the membrane. The catalysed reaction is L-cysteinyl-[protein] + hexadecanoyl-CoA = S-hexadecanoyl-L-cysteinyl-[protein] + CoA. In Dictyostelium discoideum (Social amoeba), this protein is Putative ZDHHC-type palmitoyltransferase 8.